The chain runs to 443 residues: Crh-like protein 2 (443 aa).

The signal sequence occupies residues 1-20 (MVRIGSSLLLATLAATTVSA). A GH16 domain is found at 21-306 (ASDPPKCSQD…TVECYDPPSG (286 aa)). Cys56 and Cys67 are oxidised to a cystine. The active-site Nucleophile is Glu164. Glu168 serves as the catalytic Proton donor. Position 168 (Glu168) interacts with chitin. N-linked (GlcNAc...) asparagine glycans are attached at residues Asn194 and Asn237. Chitin is bound by residues Trp257 and Thr268. Asn332 and Asn359 each carry an N-linked (GlcNAc...) asparagine glycan. 2 stretches are compositionally biased toward low complexity: residues 350–367 (ASSS…SANT) and 378–410 (EPGN…SETS). The disordered stretch occupies residues 350–420 (ASSSASGSAN…ASSNKNAAPS (71 aa)). Residues 411-420 (ASSNKNAAPS) are compositionally biased toward polar residues. The GPI-like-anchor amidated asparagine moiety is linked to residue Asn416. The propeptide at 417-443 (AAPSQNERVLNGSFFAVLVAVVALVTL) is removed in mature form. The N-linked (GlcNAc...) asparagine glycan is linked to Asn427.

This sequence belongs to the glycosyl hydrolase 16 family. CRH1 subfamily. In terms of processing, the GPI-like anchor contains a phosphoceramide lipid group. The anchor position has not been determined.

The protein resides in the cell membrane. The protein localises to the secreted. Its subcellular location is the cell wall. The catalysed reaction is Random endo-hydrolysis of N-acetyl-beta-D-glucosaminide (1-&gt;4)-beta-linkages in chitin and chitodextrins.. Its function is as follows. Dual chitinase/transglycosylase that plays a role in cell wall architecture. Chitinase and transglycosylase activities are coupled. Required for the polysaccharide cross-linking at the septa and the cell wall. More specifically, transfers chitin to 1,6-beta-glucan in the cell wall. This Aspergillus fumigatus (strain ATCC MYA-4609 / CBS 101355 / FGSC A1100 / Af293) (Neosartorya fumigata) protein is Crh-like protein 2.